Here is a 367-residue protein sequence, read N- to C-terminus: Mitogen-activated protein kinase 12 (367 aa).

The 285-residue stretch at 27–311 (YQDLQPVGSG…AAEALTHPYF (285 aa)) folds into the Protein kinase domain. Residues 33 to 41 (VGSGAYGAV) and K56 contribute to the ATP site. The active-site Proton acceptor is D153. T183 bears the Phosphothreonine mark. The TXY motif lies at 183 to 185 (TGY). Position 185 is a phosphotyrosine (Y185).

It belongs to the protein kinase superfamily. CMGC Ser/Thr protein kinase family. MAP kinase subfamily. Monomer. Interacts with the PDZ domain of the syntrophin SNTA1. Interacts with SH3BP5, LIN7C, SCRIB and SYNJ2BP. Interacts with PTPN4; this interaction induces the activation of PTPN4 phosphatase activity. It depends on Mg(2+) as a cofactor. Post-translationally, dually phosphorylated on Thr-183 and Tyr-185 by MAP2K3/MKK3 and MAP2K6/MKK6, which activates the enzyme. In terms of processing, ubiquitinated. Ubiquitination leads to degradation by the proteasome pathway. As to expression, highly expressed in skeletal muscle. Also expressed in the heart, particularly in cardiac myocytes, lung, thymus and testes.

Its subcellular location is the cytoplasm. It is found in the nucleus. The protein localises to the mitochondrion. The catalysed reaction is L-seryl-[protein] + ATP = O-phospho-L-seryl-[protein] + ADP + H(+). It catalyses the reaction L-threonyl-[protein] + ATP = O-phospho-L-threonyl-[protein] + ADP + H(+). With respect to regulation, activated by phosphorylation on threonine and tyrosine. MAP2K3/MKK3 and MAP2K6/MKK6 are both essential for the activation of MAPK12 induced by environmental stress, whereas MAP2K6/MKK6 is the major MAPK12 activator in response to TNF-alpha. Its function is as follows. Serine/threonine kinase which acts as an essential component of the MAP kinase signal transduction pathway. MAPK12 is one of the four p38 MAPKs which play an important role in the cascades of cellular responses evoked by extracellular stimuli such as pro-inflammatory cytokines or physical stress leading to direct activation of transcription factors such as ELK1 and ATF2. Accordingly, p38 MAPKs phosphorylate a broad range of proteins and it has been estimated that they may have approximately 200 to 300 substrates each. Some of the targets are downstream kinases such as MAPKAPK2, which are activated through phosphorylation and further phosphorylate additional targets. Plays a role in myoblast differentiation and also in the down-regulation of cyclin D1 in response to hypoxia in adrenal cells suggesting MAPK12 may inhibit cell proliferation while promoting differentiation. Phosphorylates DLG1. Following osmotic shock, MAPK12 in the cell nucleus increases its association with nuclear DLG1, thereby causing dissociation of DLG1-SFPQ complexes. This function is independent of its catalytic activity and could affect mRNA processing and/or gene transcription to aid cell adaptation to osmolarity changes in the environment. Regulates UV-induced checkpoint signaling and repair of UV-induced DNA damage and G2 arrest after gamma-radiation exposure. MAPK12 is involved in the regulation of SLC2A1 expression and basal glucose uptake in L6 myotubes; and negatively regulates SLC2A4 expression and contraction-mediated glucose uptake in adult skeletal muscle. C-Jun (JUN) phosphorylation is stimulated by MAPK14 and inhibited by MAPK12, leading to a distinct AP-1 regulation. MAPK12 is required for the normal kinetochore localization of PLK1, prevents chromosomal instability and supports mitotic cell viability. MAPK12-signaling is also positively regulating the expansion of transient amplifying myogenic precursor cells during muscle growth and regeneration. This Mus musculus (Mouse) protein is Mitogen-activated protein kinase 12 (Mapk12).